Reading from the N-terminus, the 1379-residue chain is Protein three rows (1379 aa).

Residues V1031–Q1037 form a separase cleavage-site region. Disordered regions lie at residues P1206–A1231, P1248–K1309, and I1328–H1379. Residues A1213 to K1228 show a composition bias toward polar residues. A compositionally biased stretch (low complexity) spans P1248 to S1267.

Interacts with pim and Sse. Cleavage of thr contributes to inactivation of Sse. In terms of processing, proteolytically cleaved after the metaphase-to-anaphase transition, C-terminal cleavage product is degraded. Cleavage can only proceed within complexes that contain active Sse. In terms of tissue distribution, during embryogenesis, expressed in Malpighian tubule buds, and epithelia of foregut and hindgut.

It is found in the cytoplasm. Required specifically for chromosome disjunction during all mitoses; maternally provided protein is sufficient until mitosis 14 then zygotic protein is required. Involved in formation and/or maintenance of epithelial structures: bud extension during Malpighian tubule development, and foregut and hindgut morphogenesis. This chain is Protein three rows (thr), found in Drosophila melanogaster (Fruit fly).